The chain runs to 356 residues: 3-isopropylmalate dehydrogenase (356 aa).

Residues Arg-90, Arg-100, Arg-128, and Asp-222 each contribute to the substrate site. Positions 222, 246, and 250 each coordinate Mg(2+). 280 to 292 serves as a coordination point for NAD(+); it reads GSAPDIAGKGVAN.

This sequence belongs to the isocitrate and isopropylmalate dehydrogenases family. LeuB type 1 subfamily. As to quaternary structure, homodimer. Requires Mg(2+) as cofactor. It depends on Mn(2+) as a cofactor.

It localises to the cytoplasm. It catalyses the reaction (2R,3S)-3-isopropylmalate + NAD(+) = 4-methyl-2-oxopentanoate + CO2 + NADH. Its pathway is amino-acid biosynthesis; L-leucine biosynthesis; L-leucine from 3-methyl-2-oxobutanoate: step 3/4. In terms of biological role, catalyzes the oxidation of 3-carboxy-2-hydroxy-4-methylpentanoate (3-isopropylmalate) to 3-carboxy-4-methyl-2-oxopentanoate. The product decarboxylates to 4-methyl-2 oxopentanoate. The chain is 3-isopropylmalate dehydrogenase from Albidiferax ferrireducens (strain ATCC BAA-621 / DSM 15236 / T118) (Rhodoferax ferrireducens).